Here is a 168-residue protein sequence, read N- to C-terminus: Prespore-specific protein A (168 aa).

A signal peptide spans Met1 to Ala19. Residues Thr110, Thr114, Thr116, Thr118, Thr120, Thr122, Thr124, Thr126, Thr128, Thr130, Thr132, Thr134, and Thr138 are each glycosylated (O-linked (GlcNAc) threonine). 3 consecutive repeat copies span residues Thr116–Val119, Thr120–Val123, and Thr124–Val127. A 3 X 4 AA tandem repeats of T-P-T-V region spans residues Thr116–Val127. The span at Thr116–Pro131 shows a compositional bias: low complexity. The tract at residues Thr116–Gly147 is disordered. An O-linked (GlcNAc) serine glycan is attached at Ser140. The GPI-like-anchor amidated glycine moiety is linked to residue Gly147. Residues Ser148–Cys168 constitute a propeptide, removed in mature form.

The protein belongs to the ponticulin family. In terms of processing, O-glycosylated in the repeat region. The oligosaccharides contain N-acetylglucosamine and fucose as the major constituents. Post-translationally, the GPI-like-anchor contains a phosphoceramide group, rather than a phosphatidyl group.

The protein localises to the cell membrane. Functionally, may bind F-actin and nucleates actin assembly. The sequence is that of Prespore-specific protein A (pspA) from Dictyostelium discoideum (Social amoeba).